Reading from the N-terminus, the 187-residue chain is UPF0301 protein VF_0434 (187 aa).

It belongs to the UPF0301 (AlgH) family.

The protein is UPF0301 protein VF_0434 of Aliivibrio fischeri (strain ATCC 700601 / ES114) (Vibrio fischeri).